The following is a 408-amino-acid chain: LL-diaminopimelate aminotransferase (408 aa).

Positions 15 and 42 each coordinate substrate. Pyridoxal 5'-phosphate contacts are provided by residues tyrosine 72, serine 108–lysine 109, tyrosine 132, asparagine 187, tyrosine 218, and serine 246–serine 248. Substrate-binding residues include lysine 109, tyrosine 132, and asparagine 187. An N6-(pyridoxal phosphate)lysine modification is found at lysine 249. Residues arginine 257 and asparagine 292 each coordinate pyridoxal 5'-phosphate. Substrate contacts are provided by asparagine 292 and arginine 388.

This sequence belongs to the class-I pyridoxal-phosphate-dependent aminotransferase family. LL-diaminopimelate aminotransferase subfamily. Homodimer. The cofactor is pyridoxal 5'-phosphate.

The enzyme catalyses (2S,6S)-2,6-diaminopimelate + 2-oxoglutarate = (S)-2,3,4,5-tetrahydrodipicolinate + L-glutamate + H2O + H(+). It participates in amino-acid biosynthesis; L-lysine biosynthesis via DAP pathway; LL-2,6-diaminopimelate from (S)-tetrahydrodipicolinate (aminotransferase route): step 1/1. Functionally, involved in the synthesis of meso-diaminopimelate (m-DAP or DL-DAP), required for both lysine and peptidoglycan biosynthesis. Catalyzes the direct conversion of tetrahydrodipicolinate to LL-diaminopimelate. This Leptospira borgpetersenii serovar Hardjo-bovis (strain L550) protein is LL-diaminopimelate aminotransferase.